The primary structure comprises 382 residues: uncharacterized protein (382 aa).

12 helical membrane passes run 8–28 (VMLL…LNTL), 45–65 (MVSS…GYLI), 75–95 (YLAS…VGFW), 102–122 (FIAG…LMCS), 131–151 (LLAA…LLVS), 157–177 (LLHV…PLLF), 204–224 (LGVN…GLMP), 231–251 (GMAN…GILG), 270–290 (VQVF…AMAP), 291–311 (ALFI…AWAC), 325–345 (ALLL…AMLM), and 349–369 (SDNL…LMLL).

It belongs to the major facilitator superfamily. YcaD (TC 2.A.1.26) family.

The protein localises to the cell inner membrane. This is an uncharacterized protein from Salmonella dublin (strain CT_02021853).